The following is a 391-amino-acid chain: Elongation factor Tu (391 aa).

Residues 10 to 201 (KPHVNIGTIG…AVDEYIPTPA (192 aa)) enclose the tr-type G domain. Residues 19 to 26 (GHVDHGKT) are G1. 19-26 (GHVDHGKT) is a GTP binding site. Thr-26 serves as a coordination point for Mg(2+). The segment at 55 to 59 (GITIS) is G2. The segment at 76–79 (DCPG) is G3. Residues 76–80 (DCPGH) and 131–134 (NKVD) each bind GTP. Residues 131 to 134 (NKVD) are G4. The tract at residues 169–171 (SAL) is G5.

The protein belongs to the TRAFAC class translation factor GTPase superfamily. Classic translation factor GTPase family. EF-Tu/EF-1A subfamily. Monomer.

It is found in the cytoplasm. It catalyses the reaction GTP + H2O = GDP + phosphate + H(+). Functionally, GTP hydrolase that promotes the GTP-dependent binding of aminoacyl-tRNA to the A-site of ribosomes during protein biosynthesis. In Ruegeria pomeroyi (strain ATCC 700808 / DSM 15171 / DSS-3) (Silicibacter pomeroyi), this protein is Elongation factor Tu.